The primary structure comprises 564 residues: Kelch-like protein 12 (564 aa).

Residues 29-96 (CDITLRVEGT…VYTETVLVTV (68 aa)) form the BTB domain. The 102-residue stretch at 131 to 232 (CLGIRDFAET…LTPRYITDVI (102 aa)) folds into the BACK domain. Kelch repeat units follow at residues 278-325 (VLLV…ALND), 327-375 (VYVI…TLGD), 376-422 (MIYV…VASG), 423-469 (LIYC…LLND), 471-516 (IYVV…VLRG), and 518-563 (LYAI…VLRE).

Component of the BCR(KLHL12) E3 ubiquitin ligase complex.

It is found in the cytoplasmic vesicle. It localises to the COPII-coated vesicle. Its pathway is protein modification; protein ubiquitination. In terms of biological role, substrate-specific adapter of a BCR (BTB-CUL3-RBX1) E3 ubiquitin ligase complex that acts as a negative regulator of Wnt signaling pathway and ER-Golgi transport. The BCR(KLHL12) complex is involved in ER-Golgi transport by regulating the size of COPII coats, thereby playing a key role in collagen export, which is required for embryonic stem (ES) cells division. Negatively regulates the Wnt signaling pathway, possibly via the targeted ubiquitination and subsequent proteolysis of dvl2 and dvl3. Regulates convergent-extension movements during early embryonic development. The sequence is that of Kelch-like protein 12 (klhl12) from Danio rerio (Zebrafish).